A 336-amino-acid chain; its full sequence is MGNCLHQAELSPSTENSSQLNLEDLWNFSYDGNDSFPEIDYDASLEAAAPCHSCNLLDDSSLPFFILASVLGILASSTVLFLLFRPLFRWQLCPGWPVLAQLAVGSTLFSIVVPILAPGLGNTRSSAPCSLGYCVWYGSAFAQALLLGCHASLGPKLGAGQVPGLTLGLSVGLWGAAALLTLPITLASDASDGLCTPIYSTELKALQATHTVACFAIFVLLPLGLFGAKGLKKVLGMGPGPWMNILWVWFIFWWPHGVVLGLDFLVRSKLLLLPTCLAQQVLDLLLNLAEALAIVHCVATPLLLALFCHQATRTLVPSLPLPERWSSPVDTLGSKS.

The Extracellular portion of the chain corresponds to 1–63; it reads MGNCLHQAEL…CNLLDDSSLP (63 aa). 3 N-linked (GlcNAc...) asparagine glycosylation sites follow: Asn16, Asn27, and Asn33. 2 disulfide bridges follow: Cys51–Cys276 and Cys129–Cys195. The chain crosses the membrane as a helical span at residues 64–84; the sequence is FFILASVLGILASSTVLFLLF. Over 85 to 95 the chain is Cytoplasmic; that stretch reads RPLFRWQLCPG. A helical membrane pass occupies residues 96 to 116; the sequence is WPVLAQLAVGSTLFSIVVPIL. Over 117–129 the chain is Extracellular; the sequence is APGLGNTRSSAPC. Residues 130-153 form a helical membrane-spanning segment; sequence SLGYCVWYGSAFAQALLLGCHASL. At 154 to 166 the chain is on the cytoplasmic side; it reads GPKLGAGQVPGLT. A helical membrane pass occupies residues 167-187; sequence LGLSVGLWGAAALLTLPITLA. The Extracellular segment spans residues 188–207; that stretch reads SDASDGLCTPIYSTELKALQ. Residues 208-228 form a helical membrane-spanning segment; it reads ATHTVACFAIFVLLPLGLFGA. Residues 229–244 lie on the Cytoplasmic side of the membrane; the sequence is KGLKKVLGMGPGPWMN. Residues 245-265 traverse the membrane as a helical segment; that stretch reads ILWVWFIFWWPHGVVLGLDFL. The Extracellular segment spans residues 266 to 287; sequence VRSKLLLLPTCLAQQVLDLLLN. The helical transmembrane segment at 288 to 308 threads the bilayer; the sequence is LAEALAIVHCVATPLLLALFC. Residues 309–336 lie on the Cytoplasmic side of the membrane; that stretch reads HQATRTLVPSLPLPERWSSPVDTLGSKS.

It belongs to the G-protein coupled receptor 1 family. Atypical chemokine receptor subfamily.

The protein resides in the early endosome. It localises to the recycling endosome. The protein localises to the membrane. Atypical chemokine receptor that controls chemokine levels and localization via high-affinity chemokine binding that is uncoupled from classic ligand-driven signal transduction cascades, resulting instead in chemokine sequestration, degradation, or transcytosis. Also known as interceptor (internalizing receptor) or chemokine-scavenging receptor or chemokine decoy receptor. Has a promiscuous chemokine-binding profile, interacting with inflammatory chemokines of both the CXC and the CC subfamilies but not with homeostatic chemokines. Acts as a receptor for chemokines including CCL2, CCL5, CCL7, CCL11, CCL13, CCL14, CCL17, CXCL5, CXCL6, IL8/CXCL8, CXCL11, GRO, RANTES, MCP-1 and TARC. May regulate chemokine bioavailability and, consequently, leukocyte recruitment through two distinct mechanisms: when expressed in endothelial cells, it sustains the abluminal to luminal transcytosis of tissue-derived chemokines and their subsequent presentation to circulating leukocytes; when expressed in erythrocytes, serves as blood reservoir of cognate chemokines but also as a chemokine sink, buffering potential surges in plasma chemokine levels. The chain is Atypical chemokine receptor 1 (ACKR1) from Saguinus imperator (Emperor tamarin).